A 411-amino-acid chain; its full sequence is Aspartokinase (411 aa).

Residue Lys7 to Gly10 coordinates ATP. Residue Arg25 to Lys30 coordinates substrate. Ser41 lines the ATP pocket. Residues Thr47 to Glu49, Glu74, Leu125 to Asn126, Arg150 to Ser153, and Ser153 each bind substrate. Residues Thr173 to Asp174 and Phe179 to Arg184 contribute to the ATP site. 2 consecutive ACT domains span residues Val264–Gly338 and Ile344–Arg411. Substrate is bound by residues Asn289–Asp291, Gln295, Val355–Ala356, Gln369–Val370, and Ser376–Glu377.

It belongs to the aspartokinase family. In terms of assembly, tetramer consisting of 2 isoforms Alpha (catalytic and regulation) and of a homodimer of 2 isoforms Beta (regulation).

It catalyses the reaction L-aspartate + ATP = 4-phospho-L-aspartate + ADP. It participates in amino-acid biosynthesis; L-lysine biosynthesis via DAP pathway; (S)-tetrahydrodipicolinate from L-aspartate: step 1/4. The protein operates within amino-acid biosynthesis; L-methionine biosynthesis via de novo pathway; L-homoserine from L-aspartate: step 1/3. It functions in the pathway amino-acid biosynthesis; L-threonine biosynthesis; L-threonine from L-aspartate: step 1/5. Its activity is regulated as follows. Lysine-sensitive. Functionally, catalyzes the phosphorylation of the beta-carboxyl group of aspartic acid with ATP to yield 4-phospho-L-aspartate, which is involved in the branched biosynthetic pathway leading to the biosynthesis of amino acids threonine, isoleucine and methionine. This is Aspartokinase (lysC) from Bacillus sp. (strain MGA3).